The sequence spans 183 residues: NADH-quinone oxidoreductase subunit A (183 aa).

3 consecutive transmembrane segments (helical) span residues Ile11–Leu31, Phe63–Trp83, and Val98–Leu118. The segment at Thr159–Glu183 is disordered.

The protein belongs to the complex I subunit 3 family. As to quaternary structure, NDH-1 is composed of 14 different subunits. Subunits NuoA, H, J, K, L, M, N constitute the membrane sector of the complex.

It localises to the cell inner membrane. It catalyses the reaction a quinone + NADH + 5 H(+)(in) = a quinol + NAD(+) + 4 H(+)(out). Its function is as follows. NDH-1 shuttles electrons from NADH, via FMN and iron-sulfur (Fe-S) centers, to quinones in the respiratory chain. The immediate electron acceptor for the enzyme in this species is believed to be ubiquinone. Couples the redox reaction to proton translocation (for every two electrons transferred, four hydrogen ions are translocated across the cytoplasmic membrane), and thus conserves the redox energy in a proton gradient. The protein is NADH-quinone oxidoreductase subunit A of Acinetobacter baumannii (strain AYE).